Consider the following 97-residue polypeptide: Core protein A15 homolog (97 aa).

The protein belongs to the chordopoxvirinae A15 family. Part of a complex composed of A30, G7, F10 kinase, A15, D2, D3, and J1.

It localises to the host cytoplasm. Its subcellular location is the virion. Its function is as follows. Late protein which is a part of a large complex required for early virion morphogenesis. This complex participates in the formation of virosomes and the incorporation of virosomal contents into nascent immature virions. A15 is required for the stability and kinase activity of F10. The polypeptide is Core protein A15 homolog (Vertebrata (FPV)).